The primary structure comprises 142 residues: Large ribosomal subunit protein uL11 (142 aa).

Belongs to the universal ribosomal protein uL11 family. Part of the ribosomal stalk of the 50S ribosomal subunit. Interacts with L10 and the large rRNA to form the base of the stalk. L10 forms an elongated spine to which L12 dimers bind in a sequential fashion forming a multimeric L10(L12)X complex. Post-translationally, one or more lysine residues are methylated.

Functionally, forms part of the ribosomal stalk which helps the ribosome interact with GTP-bound translation factors. This chain is Large ribosomal subunit protein uL11, found in Actinobacillus succinogenes (strain ATCC 55618 / DSM 22257 / CCUG 43843 / 130Z).